The following is a 544-amino-acid chain: CTP synthase (544 aa).

The tract at residues methionine 1–leucine 265 is amidoligase domain. Position 13 (serine 13) interacts with CTP. Serine 13 contacts UTP. ATP-binding positions include serine 14–isoleucine 19 and aspartate 71. Mg(2+) contacts are provided by aspartate 71 and glutamate 139. CTP contacts are provided by residues aspartate 146–glutamate 148, lysine 186–glutamine 191, and lysine 222. UTP-binding positions include lysine 186–glutamine 191 and lysine 222. Positions lysine 290–alanine 544 constitute a Glutamine amidotransferase type-1 domain. Glycine 353 is an L-glutamine binding site. Cysteine 380 acts as the Nucleophile; for glutamine hydrolysis in catalysis. L-glutamine-binding positions include leucine 381–glutamine 384, glutamate 404, and arginine 471. Active-site residues include histidine 517 and glutamate 519.

It belongs to the CTP synthase family. Homotetramer.

The enzyme catalyses UTP + L-glutamine + ATP + H2O = CTP + L-glutamate + ADP + phosphate + 2 H(+). The catalysed reaction is L-glutamine + H2O = L-glutamate + NH4(+). It carries out the reaction UTP + NH4(+) + ATP = CTP + ADP + phosphate + 2 H(+). It participates in pyrimidine metabolism; CTP biosynthesis via de novo pathway; CTP from UDP: step 2/2. With respect to regulation, allosterically activated by GTP, when glutamine is the substrate; GTP has no effect on the reaction when ammonia is the substrate. The allosteric effector GTP functions by stabilizing the protein conformation that binds the tetrahedral intermediate(s) formed during glutamine hydrolysis. Inhibited by the product CTP, via allosteric rather than competitive inhibition. In terms of biological role, catalyzes the ATP-dependent amination of UTP to CTP with either L-glutamine or ammonia as the source of nitrogen. Regulates intracellular CTP levels through interactions with the four ribonucleotide triphosphates. This chain is CTP synthase, found in Neisseria meningitidis serogroup C / serotype 2a (strain ATCC 700532 / DSM 15464 / FAM18).